The sequence spans 440 residues: Serine/threonine-protein kinase 2 (440 aa).

Positions 85–440 (NDDFYHISTG…FSNWINGESC (356 aa)) constitute a Protein kinase domain. ATP contacts are provided by residues 91–99 (ISTGGYGIV) and Lys-115. Asp-306 acts as the Proton acceptor in catalysis.

Belongs to the protein kinase superfamily. Ser/Thr protein kinase family. Poxviruses subfamily. Post-translationally, phosphorylated in vivo. Autophosphorylated in vitro.

It localises to the host endoplasmic reticulum. The protein localises to the host endoplasmic reticulum-Golgi intermediate compartment. It carries out the reaction L-seryl-[protein] + ATP = O-phospho-L-seryl-[protein] + ADP + H(+). It catalyses the reaction L-threonyl-[protein] + ATP = O-phospho-L-threonyl-[protein] + ADP + H(+). Its function is as follows. Essential serine-protein kinase involved in the early stage of virion morphogenesis. The polypeptide is Serine/threonine-protein kinase 2 (OPG054) (Sus scrofa (Pig)).